Consider the following 263-residue polypeptide: Small ribosomal subunit protein eS4 (263 aa).

One can recognise an S4 RNA-binding domain in the interval 42–104 (LPLIIFLRNR…TGENFRLIYD (63 aa)).

Belongs to the eukaryotic ribosomal protein eS4 family.

The sequence is that of Small ribosomal subunit protein eS4 (RPS4) from Cricetulus griseus (Chinese hamster).